Here is a 310-residue protein sequence, read N- to C-terminus: TLC domain-containing protein 2 (310 aa).

6 consecutive transmembrane segments (helical) span residues 6 to 26 (LLVA…LQLL), 40 to 60 (NIFV…VGLW), 79 to 99 (VLVA…LWNQ), 117 to 137 (CLST…SLLL), 167 to 187 (ASLA…SLWL), and 194 to 214 (LSLA…SISI). Residues 33–227 (RDRWMWRNIF…IRILTKDILQ (195 aa)) enclose the TLC domain.

Belongs to the TLCD family.

Its subcellular location is the cell membrane. In terms of biological role, regulates the composition and fluidity of the plasma membrane. Inhibits the incorporation of membrane-fluidizing phospholipids containing omega-3 long-chain polyunsaturated fatty acids (LCPUFA) and thereby promotes membrane rigidity. Does not appear to have any effect on LCPUFA synthesis. The sequence is that of TLC domain-containing protein 2 (Tlcd2) from Mus musculus (Mouse).